A 466-amino-acid polypeptide reads, in one-letter code: Soluble pyridine nucleotide transhydrogenase (466 aa).

36 to 45 (ERYQNVGGGC) lines the FAD pocket.

This sequence belongs to the class-I pyridine nucleotide-disulfide oxidoreductase family. Requires FAD as cofactor.

It is found in the cytoplasm. The enzyme catalyses NAD(+) + NADPH = NADH + NADP(+). Functionally, conversion of NADPH, generated by peripheral catabolic pathways, to NADH, which can enter the respiratory chain for energy generation. This Escherichia fergusonii (strain ATCC 35469 / DSM 13698 / CCUG 18766 / IAM 14443 / JCM 21226 / LMG 7866 / NBRC 102419 / NCTC 12128 / CDC 0568-73) protein is Soluble pyridine nucleotide transhydrogenase.